Consider the following 1648-residue polypeptide: Pleiotropic ABC efflux transporter of multiple drugs YBT1 (1648 aa).

A helical membrane pass occupies residues N28–I48. N72 is a glycosylation site (N-linked (GlcNAc...) asparagine). A run of 4 helical transmembrane segments spans residues V140 to E160, P175 to N195, N207 to F227, and L250 to L270. The N-linked (GlcNAc...) asparagine glycan is linked to N306. 2 consecutive transmembrane segments (helical) span residues F352–V372 and M392–C412. An ABC transmembrane type-1 1 domain is found at C361–Q674. N471 is a glycosylation site (N-linked (GlcNAc...) asparagine). Transmembrane regions (helical) follow at residues I501–S521 and I523–I543. N-linked (GlcNAc...) asparagine glycosylation occurs at N573. 2 helical membrane passes run V612 to F632 and L643 to L662. The ABC transporter 1 domain maps to L706 to K947. N-linked (GlcNAc...) asparagine glycosylation occurs at N710. Residue G741–T748 coordinates ATP. 2 N-linked (GlcNAc...) asparagine glycosylation sites follow: N784 and N798. Residues M1012–L1032 form a helical membrane-spanning segment. Positions L1032–M1333 constitute an ABC transmembrane type-1 2 domain. The N-linked (GlcNAc...) asparagine glycan is linked to N1042. The next 3 membrane-spanning stretches (helical) occupy residues I1089 to I1109, I1168 to I1188, and A1191 to L1211. N-linked (GlcNAc...) asparagine glycosylation is present at N1255. Transmembrane regions (helical) follow at residues L1282–I1302 and G1305–V1325. The ABC transporter 2 domain occupies V1372–E1622. N1376 is a glycosylation site (N-linked (GlcNAc...) asparagine). G1406–S1413 is a binding site for ATP. Residues N1503, N1524, and N1573 are each glycosylated (N-linked (GlcNAc...) asparagine).

This sequence belongs to the ABC transporter superfamily. ABCC family. Conjugate transporter (TC 3.A.1.208) subfamily.

The protein localises to the membrane. Its function is as follows. Pleiotropic ABC efflux transporter that might be involved in the resistance to azoles such as fluconazole. This is Pleiotropic ABC efflux transporter of multiple drugs YBT1 from Candida glabrata (strain ATCC 2001 / BCRC 20586 / JCM 3761 / NBRC 0622 / NRRL Y-65 / CBS 138) (Yeast).